We begin with the raw amino-acid sequence, 471 residues long: T-box transcription factor T (471 aa).

A DNA-binding region (T-box) is located at residues 24–196; it reads LWTKFCSLTN…HNPFAKAFLD (173 aa).

As to expression, developing notochord.

Its subcellular location is the nucleus. Functionally, involved in the transcriptional regulation of genes required for mesoderm differentiation. The chain is T-box transcription factor T from Halocynthia roretzi (Sea squirt).